Here is a 585-residue protein sequence, read N- to C-terminus: Auxin response factor 17 (585 aa).

Positions phenylalanine 119 to proline 221 form a DNA-binding region, TF-B3. Disordered stretches follow at residues glutamate 483 to leucine 517 and glutamate 535 to glycine 585. Residues glycine 488 to leucine 510 are compositionally biased toward low complexity. A compositionally biased stretch (polar residues) spans lysine 573–glycine 585.

The protein belongs to the ARF family. Homo and heterodimers.

It localises to the nucleus. In terms of biological role, auxin response factors (ARFs) are transcriptional factors that bind specifically to the DNA sequence 5'-TGTCTC-3' found in the auxin-responsive promoter elements (AuxREs). Could act as transcriptional activator or repressor. Formation of heterodimers with Aux/IAA proteins may alter their ability to modulate early auxin response genes expression. The sequence is that of Auxin response factor 17 (ARF17) from Arabidopsis thaliana (Mouse-ear cress).